Consider the following 599-residue polypeptide: NADH-quinone oxidoreductase subunit C/D (599 aa).

An NADH dehydrogenase I subunit C region spans residues 1-190; the sequence is MMIDQIAQES…DPFELTRQKE (190 aa). Positions 214–599 are NADH dehydrogenase I subunit D; the sequence is DFMFLNLGPN…IDFVMSDVDR (386 aa).

In the N-terminal section; belongs to the complex I 30 kDa subunit family. The protein in the C-terminal section; belongs to the complex I 49 kDa subunit family. In terms of assembly, NDH-1 is composed of 13 different subunits. Subunits NuoB, CD, E, F, and G constitute the peripheral sector of the complex.

The protein resides in the cell inner membrane. It catalyses the reaction a quinone + NADH + 5 H(+)(in) = a quinol + NAD(+) + 4 H(+)(out). NDH-1 shuttles electrons from NADH, via FMN and iron-sulfur (Fe-S) centers, to quinones in the respiratory chain. The immediate electron acceptor for the enzyme in this species is believed to be ubiquinone. Couples the redox reaction to proton translocation (for every two electrons transferred, four hydrogen ions are translocated across the cytoplasmic membrane), and thus conserves the redox energy in a proton gradient. This is NADH-quinone oxidoreductase subunit C/D from Photorhabdus laumondii subsp. laumondii (strain DSM 15139 / CIP 105565 / TT01) (Photorhabdus luminescens subsp. laumondii).